The primary structure comprises 562 residues: Chaperonin GroEL 1 (562 aa).

Residues 30 to 33, K51, 87 to 91, G415, 478 to 480, and D494 contribute to the ATP site; these read TLGP, DGTTT, and NAA.

The protein belongs to the chaperonin (HSP60) family. In terms of assembly, forms a cylinder of 14 subunits composed of two heptameric rings stacked back-to-back. Interacts with the co-chaperonin GroES.

The protein resides in the cytoplasm. The catalysed reaction is ATP + H2O + a folded polypeptide = ADP + phosphate + an unfolded polypeptide.. Its function is as follows. Together with its co-chaperonin GroES, plays an essential role in assisting protein folding. The GroEL-GroES system forms a nano-cage that allows encapsulation of the non-native substrate proteins and provides a physical environment optimized to promote and accelerate protein folding. This Sorangium cellulosum (strain So ce56) (Polyangium cellulosum (strain So ce56)) protein is Chaperonin GroEL 1.